The primary structure comprises 377 residues: Succinyl-diaminopimelate desuccinylase (377 aa).

Zn(2+) is bound at residue His66. Asp68 is a catalytic residue. Asp99 contributes to the Zn(2+) binding site. Residue Glu133 is the Proton acceptor of the active site. The Zn(2+) site is built by Glu134, Glu162, and His348.

Belongs to the peptidase M20A family. DapE subfamily. In terms of assembly, homodimer. Requires Zn(2+) as cofactor. It depends on Co(2+) as a cofactor.

The enzyme catalyses N-succinyl-(2S,6S)-2,6-diaminopimelate + H2O = (2S,6S)-2,6-diaminopimelate + succinate. Its pathway is amino-acid biosynthesis; L-lysine biosynthesis via DAP pathway; LL-2,6-diaminopimelate from (S)-tetrahydrodipicolinate (succinylase route): step 3/3. Catalyzes the hydrolysis of N-succinyl-L,L-diaminopimelic acid (SDAP), forming succinate and LL-2,6-diaminopimelate (DAP), an intermediate involved in the bacterial biosynthesis of lysine and meso-diaminopimelic acid, an essential component of bacterial cell walls. In Xylella fastidiosa (strain 9a5c), this protein is Succinyl-diaminopimelate desuccinylase.